Reading from the N-terminus, the 490-residue chain is Probable cytochrome P450 308a1 (490 aa).

A heme-binding site is contributed by cysteine 431.

This sequence belongs to the cytochrome P450 family. It depends on heme as a cofactor.

The protein resides in the endoplasmic reticulum membrane. The protein localises to the microsome membrane. Functionally, may be involved in the metabolism of insect hormones and in the breakdown of synthetic insecticides. The protein is Probable cytochrome P450 308a1 (Cyp308a1) of Drosophila melanogaster (Fruit fly).